Consider the following 311-residue polypeptide: F-box protein At3g18320 (311 aa).

Residues 1-46 (MTLPELPKDLVEEILCFVPATSLKRLRSTCKGWNRLFKDDKRFARK) form the F-box domain.

This Arabidopsis thaliana (Mouse-ear cress) protein is F-box protein At3g18320.